Consider the following 59-residue polypeptide: MGKKKGKGAVGLIALVCEETGIRNYTTTKNRRNTQEKLELMKYCPSLRKHTLHKEGKIK.

The protein belongs to the bacterial ribosomal protein bL33 family.

The protein is Large ribosomal subunit protein bL33 of Borrelia recurrentis (strain A1).